Reading from the N-terminus, the 358-residue chain is MVSLPQDRIKQLEKRFEIIESQMTTNPNAETYVKLASEYAELQPVIASIRALNALYGEITELETIINDKQTDIEMRHLAQEELPSLHKKVEQLEKELQILLLPKDVADEKSAIVEIRAGTGGSEAALFSGDLFRMYERYAHAHHWKVEVISLSEGEVGGYKEIIATISGKGVFSKLKYESGVHRVQRIPETETGGRIHTSAATVAVLPEAEEIDIDIRPEDIRIDTMRASGAGGQHVNTTDSAVRITHIPTGIMVVQAEKSQHQNRARALQILRARLFDIERQKVESERSASRKSQVGSGDRSERIRTYNFPQGRVTDHRINLTLYKLDRILEGDLDEIIHALISDHQTALLMEMDNN.

Gln235 is modified (N5-methylglutamine). The interval 284 to 309 (KVESERSASRKSQVGSGDRSERIRTY) is disordered.

It belongs to the prokaryotic/mitochondrial release factor family. Post-translationally, methylated by PrmC. Methylation increases the termination efficiency of RF1.

It localises to the cytoplasm. Functionally, peptide chain release factor 1 directs the termination of translation in response to the peptide chain termination codons UAG and UAA. The protein is Peptide chain release factor 1 of Bartonella tribocorum (strain CIP 105476 / IBS 506).